We begin with the raw amino-acid sequence, 427 residues long: Glutamyl-tRNA(Gln) amidotransferase subunit D (427 aa).

Positions Met1 to His18 are enriched in basic and acidic residues. Residues Met1–Gly20 form a disordered region. The region spanning Pro80–Ser413 is the Asparaginase/glutaminase domain. Catalysis depends on residues Thr90, Thr166, Asp167, and Lys243.

Belongs to the asparaginase 1 family. GatD subfamily. Heterodimer of GatD and GatE.

It catalyses the reaction L-glutamyl-tRNA(Gln) + L-glutamine + ATP + H2O = L-glutaminyl-tRNA(Gln) + L-glutamate + ADP + phosphate + H(+). Functionally, allows the formation of correctly charged Gln-tRNA(Gln) through the transamidation of misacylated Glu-tRNA(Gln) in organisms which lack glutaminyl-tRNA synthetase. The reaction takes place in the presence of glutamine and ATP through an activated gamma-phospho-Glu-tRNA(Gln). The GatDE system is specific for glutamate and does not act on aspartate. The sequence is that of Glutamyl-tRNA(Gln) amidotransferase subunit D from Halobacterium salinarum (strain ATCC 29341 / DSM 671 / R1).